Here is a 668-residue protein sequence, read N- to C-terminus: CLK4-associating serine/arginine rich protein (668 aa).

Ser101 is modified (phosphoserine). Disordered stretches follow at residues Ala173–Asp232 and Ala252–His668. Acidic residues predominate over residues Pro182–Asn214. Basic residues predominate over residues Arg265–Lys283. Phosphoserine occurs at positions 285 and 294. A compositionally biased stretch (basic and acidic residues) spans Ala290 to Ser313. Thr327 is subject to Phosphothreonine. A phosphoserine mark is found at Ser331 and Ser335. 2 stretches are compositionally biased toward low complexity: residues Ala340–Pro353 and Ser378–Ser395. A compositionally biased stretch (basic residues) spans Ser396–Arg435. A compositionally biased stretch (basic and acidic residues) spans His436–Arg446. Over residues Arg475 to Ser486 the composition is skewed to basic residues. Low complexity-rich tracts occupy residues His487 to Gln510 and Gln518 to Ser527. Position 541 is a phosphoserine (Ser541). Thr567 carries the phosphothreonine modification. A coiled-coil region spans residues Ala579–Ser641. Basic and acidic residues-rich tracts occupy residues Phe584–Ala611 and Lys619–Tyr635. A compositionally biased stretch (low complexity) spans Ser636–Arg645. Basic residues predominate over residues Ser653–His668.

Belongs to the splicing factor SR family. As to quaternary structure, probably interacts with CLK4. Phosphorylated in vitro by CLK4. In terms of tissue distribution, highly expressed in brain. Expressed at intermediate level in lung and liver. In brain, it is expressed in the hippocampus, cerebellum and olfactory bulb.

The protein resides in the nucleus. Its subcellular location is the nucleoplasm. Functionally, probably functions as an alternative splicing regulator. May regulate the mRNA splicing of genes such as CLK1. May act by regulating members of the CLK kinase family. This is CLK4-associating serine/arginine rich protein (Clasrp) from Mus musculus (Mouse).